The chain runs to 277 residues: S-formylglutathione hydrolase FrmB (277 aa).

Residues serine 145, aspartate 221, and histidine 254 each act as charge relay system in the active site.

The protein belongs to the esterase D family.

It catalyses the reaction S-formylglutathione + H2O = formate + glutathione + H(+). Serine hydrolase involved in the detoxification of formaldehyde. Hydrolyzes S-formylglutathione to glutathione and formate. This is S-formylglutathione hydrolase FrmB (frmB) from Escherichia coli O6:H1 (strain CFT073 / ATCC 700928 / UPEC).